The following is a 512-amino-acid chain: MVLDLDLFRVDKGGDPALIRETQEKRFKDPGLVDQLVKADSEWRRCRFRADNLNKLKNLCSKTIGEKMKKKEPVGDDEFIPEDVLNFDDLTADTLSALKVSQIKKVRLLIDEAIQKCDGERLKLEAERFENLREIGNLLHPSVPISNDEDADNKVERIWGDCTVRKKYSHVDLVVMVDGFEGEKGAVVAGSRGYFLKGVLVFLEQALIQYALRTLGSRGYTPIYTPFFMRKEVMQEVAQLSQFDEELYKVIGKGSEKSDDSSYDEKYLIATSEQPIAALHRDEWLRPEDLPIKYAGLSTCFRQEVGSHGRDTRGIFRVHQFEKIEQFVYSSPHDNKSWEMFEEMIGTAEEFYQSLGIPYHIVNIVSGSLNHAASKKLDLEAWFPGSGAFRELVSCSNCTDYQARRLRIRYGQTKKMMDKVEFVHMLNATMCATTRTICAILENYQTEKGIIVPEKLREFMPPGLQELIPFVKPAPIDQEPSKKQKKQHEGSKKKAKEVTLESQLQNMEVTEA.

Position 1 is an N-acetylmethionine (Met1). An interaction with tRNA region spans residues 9-61 (RVDKGGDPALIRETQEKRFKDPGLVDQLVKADSEWRRCRFRADNLNKLKNLCS). Ser241 is modified (phosphoserine). Residues Thr271 and Arg302 each coordinate L-serine. ATP is bound by residues 302–304 (RQE) and 318–321 (VHQF). Position 323 is an N6-acetyllysine (Lys323). Residue Glu325 participates in L-serine binding. 391–394 (ELVS) lines the ATP pocket. Positions 427 and 429 each coordinate L-serine. The disordered stretch occupies residues 472 to 512 (KPAPIDQEPSKKQKKQHEGSKKKAKEVTLESQLQNMEVTEA). Over residues 479–499 (EPSKKQKKQHEGSKKKAKEVT) the composition is skewed to basic and acidic residues. Positions 482-494 (KKQKKQHEGSKKK) match the Nuclear localization signal motif. The span at 500–512 (LESQLQNMEVTEA) shows a compositional bias: polar residues.

The protein belongs to the class-II aminoacyl-tRNA synthetase family. Type-1 seryl-tRNA synthetase subfamily. As to quaternary structure, homodimer. The tRNA molecule may bind across the dimer. Interacts with SIRT2. Interacts with METTL6; interaction is required for the tRNA N(3)-methylcytidine methyltransferase activity of METTL6.

It localises to the cytoplasm. Its subcellular location is the nucleus. It catalyses the reaction tRNA(Ser) + L-serine + ATP = L-seryl-tRNA(Ser) + AMP + diphosphate + H(+). The catalysed reaction is tRNA(Sec) + L-serine + ATP = L-seryl-tRNA(Sec) + AMP + diphosphate + H(+). It participates in aminoacyl-tRNA biosynthesis; selenocysteinyl-tRNA(Sec) biosynthesis; L-seryl-tRNA(Sec) from L-serine and tRNA(Sec): step 1/1. Its function is as follows. Catalyzes the attachment of serine to tRNA(Ser) in a two-step reaction: serine is first activated by ATP to form Ser-AMP and then transferred to the acceptor end of tRNA(Ser). Is probably also able to aminoacylate tRNA(Sec) with serine, to form the misacylated tRNA L-seryl-tRNA(Sec), which will be further converted into selenocysteinyl-tRNA(Sec). In the nucleus, binds to the VEGFA core promoter and prevents MYC binding and transcriptional activation by MYC. Recruits SIRT2 to the VEGFA promoter, promoting deacetylation of histone H4 at 'Lys-16' (H4K16). Thereby, inhibits the production of VEGFA and sprouting angiogenesis mediated by VEGFA. This chain is Serine--tRNA ligase, cytoplasmic (SARS1), found in Cricetulus griseus (Chinese hamster).